The sequence spans 445 residues: Tubulin beta-2 chain (445 aa).

Residues Gln-12, Glu-73, Ser-142, Gly-146, Thr-147, Gly-148, Asn-208, and Asn-230 each coordinate GTP. Glu-73 provides a ligand contact to Mg(2+).

It belongs to the tubulin family. Dimer of alpha and beta chains. A typical microtubule is a hollow water-filled tube with an outer diameter of 25 nm and an inner diameter of 15 nM. Alpha-beta heterodimers associate head-to-tail to form protofilaments running lengthwise along the microtubule wall with the beta-tubulin subunit facing the microtubule plus end conferring a structural polarity. Microtubules usually have 13 protofilaments but different protofilament numbers can be found in some organisms and specialized cells. It depends on Mg(2+) as a cofactor.

Its subcellular location is the cytoplasm. It is found in the cytoskeleton. Functionally, tubulin is the major constituent of microtubules, a cylinder consisting of laterally associated linear protofilaments composed of alpha- and beta-tubulin heterodimers. Microtubules grow by the addition of GTP-tubulin dimers to the microtubule end, where a stabilizing cap forms. Below the cap, tubulin dimers are in GDP-bound state, owing to GTPase activity of alpha-tubulin. The sequence is that of Tubulin beta-2 chain (TUBB2) from Suillus bovinus (Jersey cow bolete).